Consider the following 500-residue polypeptide: C6 finger domain transcription factor sirZ (500 aa).

Residues 28–54 (CNACHEVKLKCLGGQPCARCRNKQVEC) constitute a DNA-binding region (zn(2)-C6 fungal-type). Basic and acidic residues predominate over residues 79 to 88 (QAKAMSRPEE). 2 disordered regions span residues 79 to 168 (QAKA…EQIS) and 302 to 332 (AGSFSTSGPGSSQEGSHFLSSRHSQSSGMYQ). A compositionally biased stretch (acidic residues) spans 135-147 (GAEEELLDQEERD). Over residues 154–165 (LVENPPNLNPLE) the composition is skewed to low complexity. A compositionally biased stretch (polar residues) spans 304–316 (SFSTSGPGSSQEG). Residues 317–328 (SHFLSSRHSQSS) are compositionally biased toward low complexity.

The protein localises to the nucleus. Transcription factor that regulates sirodesmin production and contributes to virulence. Probably binds to the consensus motif TCGGN(3)CCGA found in the promoters of sirT, sirP, sirO, sirN, sirP, sirB, sirR, sirJ and sirQ. This chain is C6 finger domain transcription factor sirZ, found in Leptosphaeria maculans (Blackleg fungus).